The following is a 231-amino-acid chain: NADH-ubiquinone oxidoreductase chain 4 (231 aa).

The next 6 membrane-spanning stretches (helical) occupy residues 1–21 (PIAG…YGMI), 34–54 (MFMP…LTCL), 63–85 (IAYS…TPWG), 89–111 (AMAL…NTTY), 128–148 (ILPM…AIPP), and 156–176 (FLIM…LGLS).

It belongs to the complex I subunit 4 family.

Its subcellular location is the mitochondrion membrane. The enzyme catalyses a ubiquinone + NADH + 5 H(+)(in) = a ubiquinol + NAD(+) + 4 H(+)(out). Core subunit of the mitochondrial membrane respiratory chain NADH dehydrogenase (Complex I) that is believed to belong to the minimal assembly required for catalysis. Complex I functions in the transfer of electrons from NADH to the respiratory chain. The immediate electron acceptor for the enzyme is believed to be ubiquinone. This chain is NADH-ubiquinone oxidoreductase chain 4 (MT-ND4), found in Bothriechis schlegelii (Eyelash palm pitviper).